Here is a 617-residue protein sequence, read N- to C-terminus: MLKTVTTAMAAGDDDVPASILEIELPAILLNESLFIELNGNLTQLVDTTSNLSQIVWNRSINGNGNSNTFDLVDDEQERAAVEFWLLVKMIAMAVVLGLMILVTIIGNVFVIAAIILERNLQNVANYLVASLAVADLFVACLVMPLGAVYEISNGWILGPELCDIWTSCDVLCCTASILHLVAIAADRYWTVTNIDYNNLRTPRRVFLMIFCVWFAALIVSLAPQFGWKDPDYMKRIEEQHCMVSQDVGYQIFATCCTFYVPLLVILFLYWKIYIIARKRIQRRAQKSFNVTLTETDCDSAVRELKKERSKRRAERKRLEAGERTPVDGDGTGGQLQRRTRKRMRICFGRNTNTANVVAGSEGAVARSMAAIAVDFASLAITREETEFSTSNYDNKSHAGTELTTVSSDADDYRTSNANEIITLSQQVAHATQHHLIASHLNAITPLAQSIAMGGVGCLTTTTPSEKALSGAGTVAGAVAGGSGSGSGEEGAGTEGKNAGVGLGGVLASIANPHQKLAKRRQLLEAKRERKAAQTLAIITGAFVICWLPFFVMALTMSLCKECEIHTAVASLFLWLGYFNSTLNPVIYTIFNPEFRRAFKRILFGRKAAARARSAKI.

The Extracellular portion of the chain corresponds to 1-95 (MLKTVTTAMA…LLVKMIAMAV (95 aa)). 4 N-linked (GlcNAc...) asparagine glycosylation sites follow: N31, N41, N51, and N58. Residues 96 to 116 (VLGLMILVTIIGNVFVIAAII) form a helical membrane-spanning segment. Topologically, residues 117 to 128 (LERNLQNVANYL) are cytoplasmic. The helical transmembrane segment at 129 to 149 (VASLAVADLFVACLVMPLGAV) threads the bilayer. Residues 150-164 (YEISNGWILGPELCD) lie on the Extracellular side of the membrane. C163 and C242 form a disulfide bridge. A helical membrane pass occupies residues 165–185 (IWTSCDVLCCTASILHLVAIA). Topologically, residues 186-205 (ADRYWTVTNIDYNNLRTPRR) are cytoplasmic. The chain crosses the membrane as a helical span at residues 206–226 (VFLMIFCVWFAALIVSLAPQF). Over 227 to 256 (GWKDPDYMKRIEEQHCMVSQDVGYQIFATC) the chain is Extracellular. Residues 257–277 (CTFYVPLLVILFLYWKIYIIA) form a helical membrane-spanning segment. Residues 278-534 (RKRIQRRAQK…EAKRERKAAQ (257 aa)) lie on the Cytoplasmic side of the membrane. Positions 309 to 336 (RSKRRAERKRLEAGERTPVDGDGTGGQL) are disordered. Basic and acidic residues predominate over residues 317–327 (KRLEAGERTPV). Residues 535–555 (TLAIITGAFVICWLPFFVMAL) traverse the membrane as a helical segment. At 556-570 (TMSLCKECEIHTAVA) the chain is on the extracellular side. A helical transmembrane segment spans residues 571-591 (SLFLWLGYFNSTLNPVIYTIF). The Cytoplasmic portion of the chain corresponds to 592–617 (NPEFRRAFKRILFGRKAAARARSAKI).

Belongs to the G-protein coupled receptor 1 family.

The protein resides in the cell membrane. Functionally, this is one of the several different receptors for 5-hydroxytryptamine (serotonin), a biogenic hormone that functions as a neurotransmitter, a hormone, and a mitogen. The activity of this receptor is mediated by G proteins which inhibit adenylate cyclase. This chain is 5-hydroxytryptamine receptor 2B (5-HT1B), found in Drosophila melanogaster (Fruit fly).